The chain runs to 668 residues: DNA ligase (668 aa).

NAD(+) is bound by residues 34–38 (DTEYD), 83–84 (SL), and glutamate 114. Lysine 116 functions as the N6-AMP-lysine intermediate in the catalytic mechanism. Arginine 137, glutamate 171, lysine 286, and lysine 310 together coordinate NAD(+). Zn(2+) is bound by residues cysteine 404, cysteine 407, cysteine 422, and cysteine 427. The BRCT domain maps to 588–668 (NSDSIIANKS…FFDLLKSEKG (81 aa)).

Belongs to the NAD-dependent DNA ligase family. LigA subfamily. Requires Mg(2+) as cofactor. It depends on Mn(2+) as a cofactor.

The catalysed reaction is NAD(+) + (deoxyribonucleotide)n-3'-hydroxyl + 5'-phospho-(deoxyribonucleotide)m = (deoxyribonucleotide)n+m + AMP + beta-nicotinamide D-nucleotide.. In terms of biological role, DNA ligase that catalyzes the formation of phosphodiester linkages between 5'-phosphoryl and 3'-hydroxyl groups in double-stranded DNA using NAD as a coenzyme and as the energy source for the reaction. It is essential for DNA replication and repair of damaged DNA. This chain is DNA ligase, found in Mycoplasma mycoides subsp. mycoides SC (strain CCUG 32753 / NCTC 10114 / PG1).